A 321-amino-acid polypeptide reads, in one-letter code: Isopenicillin N synthase (321 aa).

Residues 1 to 42 (MPVLMPSADVPTIDISPQLFGTDPTPRRTSRGRSTRPARGSG) form a disordered region. Residues R87, Y91, and Y188 each coordinate isopenicillin N. Positions 87, 91, 188, 213, and 215 each coordinate N-[(5S)-5-amino-5-carboxypentanoyl]-L-cysteinyl-D-valine. A Fe2OG dioxygenase domain is found at 179-287 (TLSAVSMIRY…RLSLPFFLHA (109 aa)). Fe(2+)-binding residues include H213, D215, and H269. Residue R278 coordinates 2-oxoglutarate. S280 contacts isopenicillin N. An N-[(5S)-5-amino-5-carboxypentanoyl]-L-cysteinyl-D-valine-binding site is contributed by S280.

It belongs to the iron/ascorbate-dependent oxidoreductase family. Fe cation is required as a cofactor. It depends on L-ascorbate as a cofactor.

The catalysed reaction is N-[(5S)-5-amino-5-carboxypentanoyl]-L-cysteinyl-D-valine + O2 = isopenicillin N + 2 H2O. The protein operates within antibiotic biosynthesis; penicillin G biosynthesis; penicillin G from L-alpha-aminoadipate and L-cysteine and L-valine: step 2/3. Removes, in the presence of oxygen, 4 hydrogen atoms from delta-L-(alpha-aminoadipyl)-L-cysteinyl-D-valine (ACV) to form the azetidinone and thiazolidine rings of isopenicillin. This chain is Isopenicillin N synthase (pcbC), found in Streptantibioticus cattleyicolor (Streptomyces cattleya).